Consider the following 444-residue polypeptide: UDP-N-acetylmuramoylalanine--D-glutamate ligase (444 aa).

109 to 115 (GSNGKTT) contributes to the ATP binding site.

Belongs to the MurCDEF family.

The protein localises to the cytoplasm. The catalysed reaction is UDP-N-acetyl-alpha-D-muramoyl-L-alanine + D-glutamate + ATP = UDP-N-acetyl-alpha-D-muramoyl-L-alanyl-D-glutamate + ADP + phosphate + H(+). It participates in cell wall biogenesis; peptidoglycan biosynthesis. Its function is as follows. Cell wall formation. Catalyzes the addition of glutamate to the nucleotide precursor UDP-N-acetylmuramoyl-L-alanine (UMA). The protein is UDP-N-acetylmuramoylalanine--D-glutamate ligase of Bacteroides fragilis (strain ATCC 25285 / DSM 2151 / CCUG 4856 / JCM 11019 / LMG 10263 / NCTC 9343 / Onslow / VPI 2553 / EN-2).